The chain runs to 324 residues: Interleukin-12 subunit beta (324 aa).

A signal peptide spans 1–22; the sequence is MHLQQLVVSWFSLVWLASPIVA. The region spanning 23–106 is the Ig-like C2-type domain; it reads IWELEKNVYV…LSQSLLLLHK (84 aa). An intrachain disulfide couples Cys50 to Cys90. Residues Asn125, Asn135, and Asn218 are each glycosylated (N-linked (GlcNAc...) asparagine). The Fibronectin type-III domain maps to 233–324; it reads PPKNLQLNPL…WSEWASVSCN (92 aa).

Belongs to the IL-12B family. As to quaternary structure, heterodimer with IL12A; disulfide-linked. The heterodimer is known as interleukin IL-12. Heterodimer with IL23A; disulfide-linked. The heterodimer is known as interleukin IL-23. Also secreted as a monomer. Interacts with NBR1; this interaction promotes IL-12 secretion.

It localises to the secreted. Cytokine that can act as a growth factor for activated T and NK cells, enhance the lytic activity of NK/lymphokine-activated killer cells, and stimulate the production of IFN-gamma by resting PBMC. Functionally, associates with IL23A to form the IL-23 interleukin, a heterodimeric cytokine which functions in innate and adaptive immunity. IL-23 may constitute with IL-17 an acute response to infection in peripheral tissues. IL-23 binds to a heterodimeric receptor complex composed of IL12RB1 and IL23R, activates the Jak-Stat signaling cascade, stimulates memory rather than naive T-cells and promotes production of pro-inflammatory cytokines. IL-23 induces autoimmune inflammation and thus may be responsible for autoimmune inflammatory diseases and may be important for tumorigenesis. The protein is Interleukin-12 subunit beta (IL12B) of Sus scrofa (Pig).